Reading from the N-terminus, the 703-residue chain is Histone-lysine N-methyltransferase SETDB2 (703 aa).

Positions 178-248 constitute an MBD domain; that stretch reads FTKGNPLQLP…DNFSFNNHVR (71 aa). The 75-residue stretch at 310 to 384 folds into the Pre-SET domain; sequence KCCNCTDGCL…LCQNRVVQHG (75 aa). Zn(2+) contacts are provided by cysteine 312, cysteine 314, cysteine 318, cysteine 324, cysteine 326, cysteine 365, cysteine 369, cysteine 371, and cysteine 376. The region spanning 387 to 678 is the SET domain; the sequence is LRLQVFKTNT…AGTELTWDYS (292 aa). An S-adenosyl-L-methionine-binding site is contributed by 397 to 399; that stretch reads KGW. A disordered region spans residues 492 to 588; the sequence is TFSPRQARSG…SSSVISGGHP (97 aa). A compositionally biased stretch (basic residues) spans 511 to 525; it reads RRPKTKTSMLQKRRR. Positions 550–560 are enriched in polar residues; the sequence is PEQKSSAGTKI. Over residues 571–586 the composition is skewed to low complexity; it reads SGYVSEESSSSVISGG. Residues arginine 632 and 635 to 636 contribute to the S-adenosyl-L-methionine site; that span reads NH. Positions 638, 691, 693, and 698 each coordinate Zn(2+).

Belongs to the class V-like SAM-binding methyltransferase superfamily.

The protein resides in the nucleus. Its subcellular location is the chromosome. The catalysed reaction is N(6),N(6)-dimethyl-L-lysyl(9)-[histone H3] + S-adenosyl-L-methionine = N(6),N(6),N(6)-trimethyl-L-lysyl(9)-[histone H3] + S-adenosyl-L-homocysteine + H(+). Functionally, histone methyltransferase involved in left-right axis specification in early development and mitosis. Specifically trimethylates 'Lys-9' of histone H3 (H3K9me3). H3K9me3 is a specific tag for epigenetic transcriptional repression that recruits HP1 (CBX1, CBX3 and/or CBX5) proteins to methylated histones. Contributes to H3K9me3 in both the interspersed repetitive elements and centromere-associated repeats. Plays a role in chromosome condensation and segregation during mitosis. The protein is Histone-lysine N-methyltransferase SETDB2 (setdb2) of Xenopus laevis (African clawed frog).